The chain runs to 489 residues: Ribonuclease G (489 aa).

Residues 39 to 128 form the S1 motif domain; that stretch reads GNIYKGRVSR…LTTDITLPSR (90 aa). D304 and D347 together coordinate Mg(2+).

The protein belongs to the RNase E/G family. RNase G subfamily. In terms of assembly, homodimer, and possible higher multimers. Mg(2+) serves as cofactor.

It localises to the cytoplasm. Its function is as follows. Acts in the processing of the 5'-end of precursors of 16S rRNA. Confers adaptive resistance to aminoglycoside antibiotics through modulation of 16S rRNA processing. An endoribonuclease, it prefers 5'-monophosphorylated substrates and cleaves single-stranded sites rich in A and U residues; also contributes to 23S rRNA processing, tRNA processing and mRNA turnover. Involved in decay of speF mRNA, has a preference for adenine nucleotides. This is Ribonuclease G from Salmonella typhimurium (strain SL1344).